The sequence spans 165 residues: MRMADHFEETTMGTFLADYYLWTKSLHVISVLAWMAGLFYLPRLFVYHAEVVKAGTETDALFQTMERRLLRAIMNPAMIATWIFGLLLVFTPGIVDWSMLWPWTKAACVLAMTGFHMWLAARRRDFAAGANRHKGRTYRMMNELPTLLMLVIVFSAVAKWNYWGF.

4 consecutive transmembrane segments (helical) span residues 26–46 (LHVI…RLFV), 77–97 (AMIA…IVDW), 99–119 (MLWP…HMWL), and 145–165 (PTLL…YWGF). His27 is a heme binding site. Residue Lys105 coordinates heme.

It belongs to the HemJ family. Homodimer. It depends on heme b as a cofactor.

The protein localises to the cell membrane. It catalyses the reaction protoporphyrinogen IX + 3 A = protoporphyrin IX + 3 AH2. The protein operates within porphyrin-containing compound metabolism; protoporphyrin-IX biosynthesis; protoporphyrin-IX from protoporphyrinogen-IX: step 1/1. Functionally, catalyzes the oxidation of protoporphyrinogen IX to protoporphyrin IX. Is involved in the biosynthesis of tetrapyrrole molecules like heme and chlorophyll. Does not use oxygen or artificial electron acceptors such as menadione or benzoquinone. In Cereibacter sphaeroides (strain ATCC 17023 / DSM 158 / JCM 6121 / CCUG 31486 / LMG 2827 / NBRC 12203 / NCIMB 8253 / ATH 2.4.1.) (Rhodobacter sphaeroides), this protein is Protoporphyrinogen IX oxidase.